The following is a 460-amino-acid chain: Beta-1,3-xylanase TXYA (460 aa).

A signal peptide spans 1–22 (MKKLAKMISVATLGACAFQAHA). In terms of domain architecture, GH26 spans 23–337 (LDGKLVPDQG…LSDPKFIRHS (315 aa)). E138 serves as the catalytic Proton donor. Catalysis depends on E234, which acts as the Nucleophile. Residues 347–371 (GNSDGGNGGDNGGDNGGDNGGETPE) are disordered. Positions 348–366 (NSDGGNGGDNGGDNGGDNG) are enriched in gly residues. The interval 368–460 (ETPENCTDDF…TVTFTNQVCN (93 aa)) is carbohydrate binding module (CBM). 2 disulfides stabilise this stretch: C373-C459 and C404-C409.

Belongs to the glycosyl hydrolase 26 family.

The catalysed reaction is Random hydrolysis of (1-&gt;3)-beta-D-glycosidic linkages in (1-&gt;3)-beta-D-xylans.. Its activity is regulated as follows. Completely inhibited by Cu(2+), Hg(2+) and N-bromosuccinimide. Strongly inhibited by Ag(+), Zn(2+) and Pb(2+). Moderately inhibited by Fe(3+), Al(3+), Mn(2+), dithiothreitol and p-chloromercuribenzoic acid. Slightly activated by Mg(2+) and Ca(2+). Unaffected by Na(+), K(+), Ba(2+), EDTA, iodoacetic acid and N-ethylmalaimide. In terms of biological role, catalyzes the hydrolysis of beta-1,3-xylan into oligosaccharides, mainly xylotriose and xylobiose with smaller amounts of xylotetraose, xylose, xylopentaose and xylohexaose. Weakly active toward beta-1,3-xylotriose, yielding xylose and xylobiose. Converts beta-1,3-xylotetraose into xylotriose, xylobiose and xylose. Converts beta-1,3-xylopentaose into xylotetraose, xylotriose, xylobiose and xylose. Does not hydrolyze xylobiose, p-nitrophenyl-beta-xyloside, beta-1,4-xylan, curdlan or carboxymethylcellulose. The chain is Beta-1,3-xylanase TXYA from Vibrio sp.